Consider the following 371-residue polypeptide: Chitin deacetylase (371 aa).

The first 20 residues, 1 to 20, serve as a signal peptide directing secretion; it reads MLCRLFTLFITAALACCVAA. The disordered stretch occupies residues 73 to 112; that stretch reads PKPEPEPTAVPTMAPEPTTVPPTEPSGTYPPETTPTVEPT. 2 stretches are compositionally biased toward low complexity: residues 79–89 and 102–112; these read PTAVPTMAPEP and PPETTPTVEPT. Cys-164 and Cys-358 are disulfide-bonded. The N-linked (GlcNAc...) asparagine glycan is linked to Asn-167. In terms of domain architecture, NodB homology spans 168-353; it reads GTIALTFDDG…EIKKRGLRAV (186 aa). Asp-175 serves as the catalytic Proton acceptor. Asp-175 contacts acetate. Residues Asp-176, His-228, and His-232 each contribute to the Co(2+) site. Residue Asn-239 is glycosylated (N-linked (GlcNAc...) asparagine). Tyr-270 is a binding site for acetate. The Proton donor role is filled by His-327.

The protein belongs to the polysaccharide deacetylase family. It depends on Co(2+) as a cofactor.

It catalyses the reaction [(1-&gt;4)-N-acetyl-beta-D-glucosaminyl](n) + n H2O = chitosan + n acetate. Hydrolyzes the N-acetamido groups of N-acetyl-D-glucosamine residues in chitin to form chitosan and acetate. The sequence is that of Chitin deacetylase from Arthroderma benhamiae (strain ATCC MYA-4681 / CBS 112371) (Trichophyton mentagrophytes).